A 70-amino-acid chain; its full sequence is uncharacterized protein (70 aa).

This is an uncharacterized protein from Sinorhizobium fredii (strain NBRC 101917 / NGR234).